The primary structure comprises 455 residues: DNA repair protein RadA (455 aa).

Residues 12–29 form a C4-type zinc finger; it reads CSECGSYSPKWLGQCPGC. 95 to 102 is an ATP binding site; it reads GEPGIGKS. Residues 252–256 carry the RadA KNRFG motif motif; the sequence is KNRFG. The lon-protease-like stretch occupies residues 351-455; the sequence is DVFLSIAGGL…TIKDAVRLLQ (105 aa).

It belongs to the RecA family. RadA subfamily.

Functionally, DNA-dependent ATPase involved in processing of recombination intermediates, plays a role in repairing DNA breaks. Stimulates the branch migration of RecA-mediated strand transfer reactions, allowing the 3' invading strand to extend heteroduplex DNA faster. Binds ssDNA in the presence of ADP but not other nucleotides, has ATPase activity that is stimulated by ssDNA and various branched DNA structures, but inhibited by SSB. Does not have RecA's homology-searching function. The polypeptide is DNA repair protein RadA (Chlamydia muridarum (strain MoPn / Nigg)).